A 116-amino-acid polypeptide reads, in one-letter code: Carbohydrate-binding protein AQN-3 (116 aa).

An intrachain disulfide couples Cys-9 to Cys-30. A CUB domain is found at 9 to 110 (CGGFLKNYSG…SSFNVYFYGI (102 aa)). Asn-50 carries an N-linked (GlcNAc...) asparagine glycan. A disulfide bridge links Cys-53 with Cys-74. At His-85 the chain carries Methylhistidine.

This sequence belongs to the spermadhesin family. The residue at position 85 was identified as a methylhistidine by mass spectrometry.

Its subcellular location is the secreted. Functionally, AQN proteins mediate the binding of boar spermatozoa to component(s) of the egg's zona pellucida by a carbohydrate-binding mechanism. AQN proteins are secretory components of the male accessory glands being coated to the sperm surface at the time of ejaculation. They possess as well heparin-, serine-protease-inhibitor-binding capability. This is Carbohydrate-binding protein AQN-3 from Sus scrofa (Pig).